Consider the following 512-residue polypeptide: Alpha-amylase (512 aa).

Positions 1 to 15 (MKLFVLIALFGLGFA) are cleaved as a signal peptide. 3 disulfides stabilise this stretch: cysteine 43/cysteine 101, cysteine 85/cysteine 130, and cysteine 156/cysteine 175. Ca(2+) is bound by residues asparagine 115, arginine 173, and aspartate 182. Arginine 210 provides a ligand contact to chloride. The active-site Nucleophile is the aspartate 212. Ca(2+) is bound at residue histidine 216. The active-site Proton donor is the glutamate 248. Chloride is bound at residue arginine 352. Intrachain disulfides connect cysteine 394/cysteine 400 and cysteine 466/cysteine 478. The N-linked (GlcNAc...) asparagine glycan is linked to asparagine 496.

This sequence belongs to the glycosyl hydrolase 13 family. Requires Ca(2+) as cofactor. Chloride serves as cofactor.

Its subcellular location is the secreted. It catalyses the reaction Endohydrolysis of (1-&gt;4)-alpha-D-glucosidic linkages in polysaccharides containing three or more (1-&gt;4)-alpha-linked D-glucose units.. In terms of biological role, catalyzes the hydrolysis of alpha-1,4 glycosidic linkages in starch, glycogen and similar oligosaccharides. In Oryzias latipes (Japanese rice fish), this protein is Alpha-amylase.